A 320-amino-acid polypeptide reads, in one-letter code: tRNA pseudouridine synthase B (320 aa).

D49 (nucleophile) is an active-site residue.

This sequence belongs to the pseudouridine synthase TruB family. Type 1 subfamily.

The enzyme catalyses uridine(55) in tRNA = pseudouridine(55) in tRNA. Responsible for synthesis of pseudouridine from uracil-55 in the psi GC loop of transfer RNAs. In Bartonella tribocorum (strain CIP 105476 / IBS 506), this protein is tRNA pseudouridine synthase B.